The chain runs to 167 residues: Cell number regulator 3 (167 aa).

Residues 67–84 (GMTSCGTSAALFALIQWL) traverse the membrane as a helical segment.

This sequence belongs to the cornifelin family. Expressed only in pollen.

It localises to the membrane. In Zea mays (Maize), this protein is Cell number regulator 3 (CNR3).